Here is an 842-residue protein sequence, read N- to C-terminus: DNA gyrase subunit A (842 aa).

Residues 42–511 (LPEVRDGLKP…ADGEVSDEDL (470 aa)) enclose the Topo IIA-type catalytic domain. Catalysis depends on Y130, which acts as the O-(5'-phospho-DNA)-tyrosine intermediate. Residues 538–544 (QKRGGKG) carry the GyrA-box motif. The interval 822–842 (EDEAAESISESDADTAESPEA) is disordered.

The protein belongs to the type II topoisomerase GyrA/ParC subunit family. As to quaternary structure, heterotetramer, composed of two GyrA and two GyrB chains. In the heterotetramer, GyrA contains the active site tyrosine that forms a transient covalent intermediate with DNA, while GyrB binds cofactors and catalyzes ATP hydrolysis.

The protein resides in the cytoplasm. It carries out the reaction ATP-dependent breakage, passage and rejoining of double-stranded DNA.. Inhibited by 4-quinoline drugs (nalidixic acid, ciprofloxacin, ofloxacin), although it is much less sensitive than the corresponding enzyme from E.coli. A type II topoisomerase that negatively supercoils closed circular double-stranded (ds) DNA in an ATP-dependent manner to modulate DNA topology and maintain chromosomes in an underwound state. Negative supercoiling favors strand separation, and DNA replication, transcription, recombination and repair, all of which involve strand separation. Also able to catalyze the interconversion of other topological isomers of dsDNA rings, including catenanes and knotted rings. Type II topoisomerases break and join 2 DNA strands simultaneously in an ATP-dependent manner. This chain is DNA gyrase subunit A, found in Mycolicibacterium smegmatis (strain ATCC 700084 / mc(2)155) (Mycobacterium smegmatis).